Consider the following 797-residue polypeptide: Calcium-transporting ATPase CtpE (797 aa).

The next 3 membrane-spanning stretches (helical) occupy residues 55–75 (LLLI…LLII), 215–235 (ILQF…YTQL), and 254–274 (VPMV…VGVV). The active-site 4-aspartylphosphate intermediate is the Asp301. Mg(2+)-binding residues include Asp301, Thr303, and Asp536. 6 helical membrane-spanning segments follow: residues 601-621 (TVYS…AIPL), 633-653 (IHVT…LSLA), 667-687 (VMTS…VTYL), 703-723 (ASTA…AVIA), 729-749 (WRLA…SLPL), and 764-784 (TSIA…MWWI).

This sequence belongs to the cation transport ATPase (P-type) (TC 3.A.3) family.

It is found in the cell membrane. The catalysed reaction is Ca(2+)(in) + ATP + H2O = Ca(2+)(out) + ADP + phosphate + H(+). In terms of biological role, P-type ATPase involved in specific uptake of calcium. This is Calcium-transporting ATPase CtpE (ctpE) from Mycobacterium tuberculosis (strain CDC 1551 / Oshkosh).